A 172-amino-acid chain; its full sequence is Adrenodoxin homolog, mitochondrial (172 aa).

Residues 1 to 16 constitute a mitochondrion transit peptide; that stretch reads MLKIVTRAGHTARISN. One can recognise a 2Fe-2S ferredoxin-type domain in the interval 61 to 163; that stretch reads LKITFILKDG…GIRVALPQMT (103 aa). [2Fe-2S] cluster-binding residues include Cys-98, Cys-104, Cys-107, and Cys-144.

The protein belongs to the adrenodoxin/putidaredoxin family. Interacts in its reduced state with the apo form of ISU1. [2Fe-2S] cluster is required as a cofactor.

It is found in the mitochondrion matrix. Iron-sulfur protein that transfers electrons in a wide variety of metabolic reactions. Involved in heme A biosynthesis and in iron-sulfur cluster assembly. Transfers electrons from adrenodoxin reductase ARH1 to heme A synthase COX15, a heme protein that catalyzes the conversion of heme O to heme A. Required for the de novo synthesis of Fe-S clusters on iron sulfur cluster assembly protein ISU1. Interact in its reduced state with ISU1 to productively deliver electrons for Fe-S cluster synthesis. Essential for coenzyme Q biosynthesis. May transfer the electrons required for the hydroxylation reaction performed by COQ6. The protein is Adrenodoxin homolog, mitochondrial of Saccharomyces cerevisiae (strain ATCC 204508 / S288c) (Baker's yeast).